The primary structure comprises 73 residues: Large ribosomal subunit protein bL31 (73 aa).

It belongs to the bacterial ribosomal protein bL31 family. Type A subfamily. As to quaternary structure, part of the 50S ribosomal subunit.

Binds the 23S rRNA. This Chelativorans sp. (strain BNC1) protein is Large ribosomal subunit protein bL31.